Here is a 470-residue protein sequence, read N- to C-terminus: UDP-N-acetylmuramoylalanine--D-glutamate ligase (470 aa).

Residue 120 to 126 (GSNGKTT) participates in ATP binding.

It belongs to the MurCDEF family.

Its subcellular location is the cytoplasm. It catalyses the reaction UDP-N-acetyl-alpha-D-muramoyl-L-alanine + D-glutamate + ATP = UDP-N-acetyl-alpha-D-muramoyl-L-alanyl-D-glutamate + ADP + phosphate + H(+). The protein operates within cell wall biogenesis; peptidoglycan biosynthesis. In terms of biological role, cell wall formation. Catalyzes the addition of glutamate to the nucleotide precursor UDP-N-acetylmuramoyl-L-alanine (UMA). The chain is UDP-N-acetylmuramoylalanine--D-glutamate ligase from Nitrosomonas eutropha (strain DSM 101675 / C91 / Nm57).